The primary structure comprises 225 residues: MADEDISLNEDQLLESMEETNGEQETEIVTETEEEGSMQIDPELEAIKARVKEMEEEAEKIKQMQSEVDKQMAGGSTTGLAAVPLSLEEKQEIDTRSVYVGNVDYGASAEELEAHFHGCGTINRVTILCNKADGHPKGFAYIEFGSKEFVETALAMNETLFRGRQIKVMSKRTNRPGLSTTNRFARGSFRGRGARASRACCHSTFRGARRAIRGYRGRANYYAPY.

Over residues 1–36 (MADEDISLNEDQLLESMEETNGEQETEIVTETEEEG) the composition is skewed to acidic residues. Residues 1 to 42 (MADEDISLNEDQLLESMEETNGEQETEIVTETEEEGSMQIDP) are disordered. Residues 14-74 (LESMEETNGE…QSEVDKQMAG (61 aa)) adopt a coiled-coil conformation. The region spanning 96-173 (RSVYVGNVDY…RQIKVMSKRT (78 aa)) is the RRM domain.

It localises to the nucleus. Its subcellular location is the cytoplasm. Its function is as follows. Involved in the 3'-end formation of mRNA precursors (pre-mRNA) by the addition of a poly(A) tail of 200-250 nt to the upstream cleavage product. Stimulates poly(A) polymerase (PAPOLA) conferring processivity on the poly(A) tail elongation reaction and also controls the poly(A) tail length. Increases the affinity of poly(A) polymerase for RNA. Binds to poly(A) and to poly(G) with high affinity. May protect the poly(A) tail from degradation. In Drosophila pseudoobscura pseudoobscura (Fruit fly), this protein is Polyadenylate-binding protein 2.